The sequence spans 202 residues: Snake venom metalloproteinase leucurolysin-A (202 aa).

Residue glutamine 1 is modified to Pyrrolidone carboxylic acid. Positions 6 to 202 constitute a Peptidase M12B domain; that stretch reads RYIELVVVAD…HNPQCILNKP (197 aa). Positions 9 and 93 each coordinate Ca(2+). 3 disulfide bridges follow: cysteine 117/cysteine 197, cysteine 157/cysteine 181, and cysteine 159/cysteine 164. Histidine 142 contributes to the Zn(2+) binding site. Residue glutamate 143 is part of the active site. Positions 146 and 152 each coordinate Zn(2+). Positions 197 and 200 each coordinate Ca(2+).

The protein belongs to the venom metalloproteinase (M12B) family. P-I subfamily. In terms of assembly, monomer. Zn(2+) serves as cofactor. Expressed by the venom gland.

The protein resides in the secreted. With respect to regulation, inhibited by EDTA and 2-mercaptoethanol. Inhibited by 1 mM zinc ion and to a lesser extent by 1 mM calcium ion. In terms of biological role, non-hemorrhagic metalloproteinase that hydrolyzes the alpha chains of fibrinogen, as well as fibrin, fibronectin and casein. Beta and gamma chains are also hydrolyzed, but more slowly. Thrombolytic activity is also observed. Induces detachment of endothelial cells followed by death, and inhibits endothelial cell adhesion to fibronectin. Induces edema in mouse paw. Inhibits ADP-induced platelet aggregation on human platelet-rich plasma with an IC(50) of 2.8 uM. The chain is Snake venom metalloproteinase leucurolysin-A from Bothrops leucurus (Whitetail lancehead).